The chain runs to 149 residues: Nucleoside diphosphate kinase 1 (149 aa).

ATP is bound by residues Lys10, Phe58, Arg86, Thr92, Arg103, and Asn113. His116 acts as the Pros-phosphohistidine intermediate in catalysis.

The protein belongs to the NDK family. The cofactor is Mg(2+).

The enzyme catalyses a 2'-deoxyribonucleoside 5'-diphosphate + ATP = a 2'-deoxyribonucleoside 5'-triphosphate + ADP. It catalyses the reaction a ribonucleoside 5'-diphosphate + ATP = a ribonucleoside 5'-triphosphate + ADP. Its function is as follows. Major role in the synthesis of nucleoside triphosphates other than ATP. The ATP gamma phosphate is transferred to the NDP beta phosphate via a ping-pong mechanism, using a phosphorylated active-site intermediate. This NDK is microtubule-associated. This is Nucleoside diphosphate kinase 1 (NDPK1) from Pisum sativum (Garden pea).